The sequence spans 462 residues: Cytochrome P450 20A1 (462 aa).

Residues 4–24 form a helical membrane-spanning segment; sequence FAIFAVTFLLALVGAVLYLYP. Residue Cys-409 coordinates heme.

The protein belongs to the cytochrome P450 family. Heme is required as a cofactor.

The protein localises to the membrane. This Mus musculus (Mouse) protein is Cytochrome P450 20A1 (Cyp20a1).